The primary structure comprises 419 residues: C2 calcium-dependent domain-containing protein 4C (419 aa).

Disordered stretches follow at residues 1-96, 115-136, 151-225, and 247-300; these read MRKT…LASE, EDWT…MSLP, AESP…SPFG, and VSQL…HTVK. A compositionally biased stretch (low complexity) spans 75-94; it reads LASPGPRRAPRSPRLPAKLA. The span at 186-196 shows a compositional bias: gly residues; sequence KGNGGDGGSRE. Positions 212-225 are enriched in polar residues; that stretch reads ESDTGSSAESSPFG. Phosphoserine is present on residues serine 259, serine 261, and serine 270. The region spanning 303-419 is the C2 domain; that stretch reads TRGSVRLLAE…LPLTSLLPFL (117 aa).

This sequence belongs to the C2CD4 family.

In Mus musculus (Mouse), this protein is C2 calcium-dependent domain-containing protein 4C (C2cd4c).